The primary structure comprises 360 residues: CCA-adding enzyme (360 aa).

2 residues coordinate ATP: Gly-8 and Arg-11. 2 residues coordinate CTP: Gly-8 and Arg-11. Mg(2+) is bound by residues Asp-21 and Asp-23. Arg-91, Arg-137, and Arg-140 together coordinate ATP. CTP is bound by residues Arg-91, Arg-137, and Arg-140.

It belongs to the tRNA nucleotidyltransferase/poly(A) polymerase family. Bacterial CCA-adding enzyme type 2 subfamily. Mg(2+) is required as a cofactor.

It catalyses the reaction a tRNA precursor + 2 CTP + ATP = a tRNA with a 3' CCA end + 3 diphosphate. The enzyme catalyses a tRNA with a 3' CCA end + 2 CTP + ATP = a tRNA with a 3' CCACCA end + 3 diphosphate. Its function is as follows. Catalyzes the addition and repair of the essential 3'-terminal CCA sequence in tRNAs without using a nucleic acid template. Adds these three nucleotides in the order of C, C, and A to the tRNA nucleotide-73, using CTP and ATP as substrates and producing inorganic pyrophosphate. tRNA 3'-terminal CCA addition is required both for tRNA processing and repair. Also involved in tRNA surveillance by mediating tandem CCA addition to generate a CCACCA at the 3' terminus of unstable tRNAs. While stable tRNAs receive only 3'-terminal CCA, unstable tRNAs are marked with CCACCA and rapidly degraded. In Francisella tularensis subsp. tularensis (strain FSC 198), this protein is CCA-adding enzyme.